Reading from the N-terminus, the 206-residue chain is Ion-translocating oxidoreductase complex subunit G (206 aa).

Residues 9 to 29 (GITLALFAAGSTGLTAVINQM) form a helical membrane-spanning segment. Residue T174 is modified to FMN phosphoryl threonine.

The protein belongs to the RnfG family. The complex is composed of six subunits: RsxA, RsxB, RsxC, RsxD, RsxE and RsxG. Requires FMN as cofactor.

It localises to the cell inner membrane. Its function is as follows. Part of a membrane-bound complex that couples electron transfer with translocation of ions across the membrane. Required to maintain the reduced state of SoxR. This is Ion-translocating oxidoreductase complex subunit G from Salmonella typhi.